The chain runs to 952 residues: Eukaryotic initiation factor 4F subunit p150 (952 aa).

Disordered regions lie at residues 1-77 (MTDE…NYNG), 115-389 (GSAP…DAGT), and 481-575 (VIPP…LVPS). Residues 7 to 16 (HPTQSASKQE) show a composition bias toward polar residues. A compositionally biased stretch (low complexity) spans 29 to 46 (ESQQQRGYTNYNNGSNYT). Residues 47–56 (QKKPYNSNRP) are compositionally biased toward polar residues. The segment covering 65–74 (GPNRYNNRGN) has biased composition (low complexity). Basic and acidic residues predominate over residues 140–151 (SGEHLDLKEQHK). Positions 154–166 (LQSQERSTVSPQP) are enriched in polar residues. Serine 163 is subject to Phosphoserine. Low complexity predominate over residues 175–191 (DSTSTSTPTPTPSTNDS). Threonine 181 carries the phosphothreonine modification. Positions 188 to 299 (TNDSKASSEE…KEESTPKVLT (112 aa)) are interaction with PAB1. Serine 195 carries the phosphoserine modification. Residues 218-228 (AALEKKRKEQL) are compositionally biased toward basic and acidic residues. The segment covering 229 to 244 (EGSSGNNNIPMKTTPE) has biased composition (polar residues). 3 stretches are compositionally biased toward basic and acidic residues: residues 246 to 276 (VEEK…KQET), 283 to 294 (QGEKGQIKEEST), and 309 to 333 (QQKE…ETKS). Polar residues predominate over residues 355–368 (TEQSNIDESATTPA). Serine 503 carries the post-translational modification Phosphoserine. Basic and acidic residues-rich tracts occupy residues 504–521 (RGHD…DRAN) and 532–569 (RMND…KEEV). An MIF4G domain is found at 607–850 (ERKMKSLLNK…IDIKELRHDK (244 aa)). The tract at residues 870 to 952 (EEERQRQLKN…ALMGESDDEE (83 aa)) is disordered. Residues 879-894 (NNSRSNSRRTNNSSNR) are compositionally biased toward low complexity. Serine 883 is subject to Phosphoserine. Position 888 is a phosphothreonine (threonine 888). Phosphoserine occurs at positions 892, 896, 908, and 948. Over residues 908-922 (SFITTRTYSQRNSQR) the composition is skewed to polar residues.

This sequence belongs to the eukaryotic initiation factor 4G family. In terms of assembly, component of the eIF4F complex, which composition varies with external and internal environmental conditions. It is composed of at least eIF4A (TIF1/TIF2), eIF4E (TIF45) and eIF4G (TIF4631 or TIF4632). Interacts with PAT1 in a RNA-dependent manner.

It localises to the cytoplasm. The protein resides in the P-body. The protein localises to the stress granule. Functionally, component of the eIF4F complex, which interacts with the mRNA cap structure and serves as an initial point of assembly for the translation apparatus. Stimulates translation by interaction with polyadenylate-binding protein PAB1, bringing the 5'- and 3'-ends of the mRNA in proximity. The formation of this circular mRNP structure appears to be critical for the synergistic effects of the cap and the poly(A) tail in facilitating translation initiation, recycling of ribosomes, and mRNA stability. TIF4631 is probably essential when TIF4632 is missing. This chain is Eukaryotic initiation factor 4F subunit p150, found in Saccharomyces cerevisiae (strain ATCC 204508 / S288c) (Baker's yeast).